A 543-amino-acid polypeptide reads, in one-letter code: Carboxypeptidase Y homolog A (543 aa).

Residues 1 to 17 form the signal peptide; it reads MRVLPATLLVGAATAAA. The propeptide occupies 18–124; it reads PPFQQILGLP…KLEAYDLRVK (107 aa). 5 disulfides stabilise this stretch: Cys179–Cys419, Cys313–Cys327, Cys337–Cys360, Cys344–Cys353, and Cys382–Cys389. Asn210 carries N-linked (GlcNAc...) asparagine glycosylation. The active site involves Ser266. Residue Asp458 is part of the active site. An N-linked (GlcNAc...) asparagine glycan is attached at Asn509. The active site involves His520.

The protein belongs to the peptidase S10 family.

The protein resides in the vacuole. It catalyses the reaction Release of a C-terminal amino acid with broad specificity.. In terms of biological role, vacuolar carboxypeptidase involved in degradation of small peptides. Digests preferentially peptides containing an aliphatic or hydrophobic residue in P1' position, as well as methionine, leucine or phenylalanine in P1 position of ester substrate. The chain is Carboxypeptidase Y homolog A (cpyA) from Neosartorya fischeri (strain ATCC 1020 / DSM 3700 / CBS 544.65 / FGSC A1164 / JCM 1740 / NRRL 181 / WB 181) (Aspergillus fischerianus).